A 161-amino-acid polypeptide reads, in one-letter code: 2-C-methyl-D-erythritol 2,4-cyclodiphosphate synthase (161 aa).

Residues aspartate 10 and histidine 12 each contribute to the a divalent metal cation site. 4-CDP-2-C-methyl-D-erythritol 2-phosphate is bound by residues 10-12 (DVH) and 36-37 (HS). Histidine 44 contacts a divalent metal cation. 4-CDP-2-C-methyl-D-erythritol 2-phosphate is bound by residues 58–60 (DIG), 63–67 (FSDTD), and arginine 144.

This sequence belongs to the IspF family. As to quaternary structure, homotrimer. A divalent metal cation serves as cofactor.

The catalysed reaction is 4-CDP-2-C-methyl-D-erythritol 2-phosphate = 2-C-methyl-D-erythritol 2,4-cyclic diphosphate + CMP. The protein operates within isoprenoid biosynthesis; isopentenyl diphosphate biosynthesis via DXP pathway; isopentenyl diphosphate from 1-deoxy-D-xylulose 5-phosphate: step 4/6. Its function is as follows. Involved in the biosynthesis of isopentenyl diphosphate (IPP) and dimethylallyl diphosphate (DMAPP), two major building blocks of isoprenoid compounds. Catalyzes the conversion of 4-diphosphocytidyl-2-C-methyl-D-erythritol 2-phosphate (CDP-ME2P) to 2-C-methyl-D-erythritol 2,4-cyclodiphosphate (ME-CPP) with a corresponding release of cytidine 5-monophosphate (CMP). The protein is 2-C-methyl-D-erythritol 2,4-cyclodiphosphate synthase of Burkholderia cenocepacia (strain HI2424).